We begin with the raw amino-acid sequence, 211 residues long: MIERTFVGENVSETLIDEYFKTKLVRAGYSHIDLKKTPIGTRITVFAEKPGFVIGRKGKMVKELTETLSTEYAVNNPQIEVKQVESPDLDPAIVGHKIASSLERGMHFRKTAHSAIRRVMGSGAKGVSIIVSGKLSGERSRTEKFMDGYMKHCGEPAEALVNKSHQLAKLKLGVVGVTVKIMKPDVSLPDEITILSGEIKEVTEYSEASQE.

A KH type-2 domain is found at 16-85 (IDEYFKTKLV…NPQIEVKQVE (70 aa)).

The protein belongs to the universal ribosomal protein uS3 family. As to quaternary structure, part of the 30S ribosomal subunit.

Binds the lower part of the 30S subunit head. This chain is Small ribosomal subunit protein uS3, found in Methanococcus maripaludis (strain C7 / ATCC BAA-1331).